The primary structure comprises 535 residues: CTP synthase (535 aa).

Residues 1-266 (MKFVVITGGV…GDYICERLGL (266 aa)) form an amidoligase domain region. Residue Ser-12 coordinates CTP. Ser-12 provides a ligand contact to UTP. ATP-binding positions include 13–18 (GIGKGI) and Asp-70. Mg(2+) contacts are provided by Asp-70 and Glu-140. Residues 147–149 (DIE), 187–192 (KTKPTQ), and Lys-223 contribute to the CTP site. Residues 187–192 (KTKPTQ) and Lys-223 each bind UTP. The region spanning 291-535 (RIAVVGKYVD…IKAAAGQGPD (245 aa)) is the Glutamine amidotransferase type-1 domain. Residue Gly-355 participates in L-glutamine binding. The Nucleophile; for glutamine hydrolysis role is filled by Cys-382. L-glutamine is bound by residues 383–386 (LGFQ), Glu-406, and Arg-464. Active-site residues include His-508 and Glu-510.

It belongs to the CTP synthase family. In terms of assembly, homotetramer.

The catalysed reaction is UTP + L-glutamine + ATP + H2O = CTP + L-glutamate + ADP + phosphate + 2 H(+). The enzyme catalyses L-glutamine + H2O = L-glutamate + NH4(+). It catalyses the reaction UTP + NH4(+) + ATP = CTP + ADP + phosphate + 2 H(+). It functions in the pathway pyrimidine metabolism; CTP biosynthesis via de novo pathway; CTP from UDP: step 2/2. Allosterically activated by GTP, when glutamine is the substrate; GTP has no effect on the reaction when ammonia is the substrate. The allosteric effector GTP functions by stabilizing the protein conformation that binds the tetrahedral intermediate(s) formed during glutamine hydrolysis. Inhibited by the product CTP, via allosteric rather than competitive inhibition. Its function is as follows. Catalyzes the ATP-dependent amination of UTP to CTP with either L-glutamine or ammonia as the source of nitrogen. Regulates intracellular CTP levels through interactions with the four ribonucleotide triphosphates. The protein is CTP synthase of Methanopyrus kandleri (strain AV19 / DSM 6324 / JCM 9639 / NBRC 100938).